We begin with the raw amino-acid sequence, 286 residues long: Pantothenate synthetase (286 aa).

30 to 37 (MGYFHEGH) provides a ligand contact to ATP. Catalysis depends on His-37, which acts as the Proton donor. Gln-61 provides a ligand contact to (R)-pantoate. Gln-61 provides a ligand contact to beta-alanine. Residue 147 to 150 (GKKD) coordinates ATP. Gln-153 serves as a coordination point for (R)-pantoate. 184-187 (MSSR) serves as a coordination point for ATP.

This sequence belongs to the pantothenate synthetase family. As to quaternary structure, homodimer.

It localises to the cytoplasm. The catalysed reaction is (R)-pantoate + beta-alanine + ATP = (R)-pantothenate + AMP + diphosphate + H(+). Its pathway is cofactor biosynthesis; (R)-pantothenate biosynthesis; (R)-pantothenate from (R)-pantoate and beta-alanine: step 1/1. Functionally, catalyzes the condensation of pantoate with beta-alanine in an ATP-dependent reaction via a pantoyl-adenylate intermediate. This is Pantothenate synthetase from Syntrophus aciditrophicus (strain SB).